The primary structure comprises 180 residues: Large ribosomal subunit protein uL5 (180 aa).

Belongs to the universal ribosomal protein uL5 family. As to quaternary structure, part of the 50S ribosomal subunit; part of the 5S rRNA/L5/L18/L25 subcomplex. Contacts the 5S rRNA and the P site tRNA. Forms a bridge to the 30S subunit in the 70S ribosome.

Functionally, this is one of the proteins that bind and probably mediate the attachment of the 5S RNA into the large ribosomal subunit, where it forms part of the central protuberance. In the 70S ribosome it contacts protein S13 of the 30S subunit (bridge B1b), connecting the 2 subunits; this bridge is implicated in subunit movement. Contacts the P site tRNA; the 5S rRNA and some of its associated proteins might help stabilize positioning of ribosome-bound tRNAs. The protein is Large ribosomal subunit protein uL5 of Acholeplasma laidlawii (strain PG-8A).